Here is a 265-residue protein sequence, read N- to C-terminus: Pyridoxine 5'-phosphate synthase (265 aa).

Position 6 (Asn6) interacts with 3-amino-2-oxopropyl phosphate. 1-deoxy-D-xylulose 5-phosphate is bound at residue 8 to 9; sequence DH. 3-amino-2-oxopropyl phosphate is bound at residue Arg17. Residue His42 is the Proton acceptor of the active site. The 1-deoxy-D-xylulose 5-phosphate site is built by Arg44 and His49. Glu69 functions as the Proton acceptor in the catalytic mechanism. Thr99 lines the 1-deoxy-D-xylulose 5-phosphate pocket. His213 acts as the Proton donor in catalysis. 3-amino-2-oxopropyl phosphate is bound by residues Gly214 and 235 to 236; that span reads GQ.

Belongs to the PNP synthase family. Homooctamer; tetramer of dimers.

Its subcellular location is the cytoplasm. It catalyses the reaction 3-amino-2-oxopropyl phosphate + 1-deoxy-D-xylulose 5-phosphate = pyridoxine 5'-phosphate + phosphate + 2 H2O + H(+). It functions in the pathway cofactor biosynthesis; pyridoxine 5'-phosphate biosynthesis; pyridoxine 5'-phosphate from D-erythrose 4-phosphate: step 5/5. Functionally, catalyzes the complicated ring closure reaction between the two acyclic compounds 1-deoxy-D-xylulose-5-phosphate (DXP) and 3-amino-2-oxopropyl phosphate (1-amino-acetone-3-phosphate or AAP) to form pyridoxine 5'-phosphate (PNP) and inorganic phosphate. This Nitratiruptor sp. (strain SB155-2) protein is Pyridoxine 5'-phosphate synthase.